We begin with the raw amino-acid sequence, 175 residues long: Shikimate kinase (175 aa).

Glycine 14–threonine 19 is an ATP binding site. Residue serine 18 coordinates Mg(2+). Substrate is bound by residues aspartate 36, arginine 60, and glycine 82. Residue arginine 120 coordinates ATP. Residue arginine 140 participates in substrate binding. Glutamine 157 lines the ATP pocket.

Belongs to the shikimate kinase family. In terms of assembly, monomer. Mg(2+) serves as cofactor.

It is found in the cytoplasm. The enzyme catalyses shikimate + ATP = 3-phosphoshikimate + ADP + H(+). The protein operates within metabolic intermediate biosynthesis; chorismate biosynthesis; chorismate from D-erythrose 4-phosphate and phosphoenolpyruvate: step 5/7. In terms of biological role, catalyzes the specific phosphorylation of the 3-hydroxyl group of shikimic acid using ATP as a cosubstrate. In Pasteurella multocida (strain Pm70), this protein is Shikimate kinase.